The primary structure comprises 215 residues: Flavin-dependent thymidylate synthase (215 aa).

The ThyX domain maps to 1-215; it reads MDVRFISLTK…FPTVAAALEW (215 aa). FAD-binding positions include serine 56, 79–81, and glutamate 87; that span reads RHR. DUMP is bound by residues 76 to 79, 87 to 91, and arginine 155; these read QILR and EFSLR. Positions 79–89 match the ThyX motif motif; that stretch reads RHRSFSFQEFS. Histidine 177 is a binding site for FAD. DUMP is bound at residue arginine 182. Arginine 182 acts as the Involved in ionization of N3 of dUMP, leading to its activation in catalysis.

It belongs to the thymidylate synthase ThyX family. Homotetramer. Requires FAD as cofactor.

It catalyses the reaction dUMP + (6R)-5,10-methylene-5,6,7,8-tetrahydrofolate + NADPH + H(+) = dTMP + (6S)-5,6,7,8-tetrahydrofolate + NADP(+). It functions in the pathway pyrimidine metabolism; dTTP biosynthesis. Functionally, catalyzes the reductive methylation of 2'-deoxyuridine-5'-monophosphate (dUMP) to 2'-deoxythymidine-5'-monophosphate (dTMP) while utilizing 5,10-methylenetetrahydrofolate (mTHF) as the methyl donor, and NADPH and FADH(2) as the reductant. The protein is Flavin-dependent thymidylate synthase of Synechocystis sp. (strain ATCC 27184 / PCC 6803 / Kazusa).